The primary structure comprises 877 residues: Polycomb protein Scm (877 aa).

Positions 1–57 (MSGGRDSSTSSGSNSAAPGASTNATSSASASASSTSTSASPGSTTSPASTQRQRGRP) are disordered. Low complexity predominate over residues 7 to 50 (SSTSSGSNSAAPGASTNATSSASASASSTSTSASPGSTTSPAST). The segment at 54–93 (RGRPAKRATCTWCGEGKLPLQYVLPTQTGKKEFCSETCIA) adopts an FCS-type zinc-finger fold. Positions 63, 66, 87, and 91 each coordinate Zn(2+). MBT repeat units lie at residues 175–273 (FDWD…LQPP) and 281–382 (SSWP…MQPP). Disordered stretches follow at residues 535 to 621 (NSRK…SNKV), 652 to 692 (TNTN…GGSA), and 713 to 735 (ANVKPSNSYYKSPTTLSSSASLP). Thr-546 carries the post-translational modification Phosphothreonine. Residues Ser-549 and Ser-550 each carry the phosphoserine modification. Over residues 560 to 569 (QSNSATTSPS) the composition is skewed to polar residues. Phosphoserine is present on Ser-585. A compositionally biased stretch (low complexity) spans 598 to 620 (ASQQNSNHSLNNNNNSASKSSNK). A compositionally biased stretch (low complexity) spans 724-735 (SPTTLSSSASLP). In terms of domain architecture, SAM spans 806-876 (WTIEEVIQYI…KVNGRRNNLA (71 aa)).

Belongs to the SCM family. In terms of assembly, scm associates with the PRC1 core complex containing PSC, PC, PH and Sce/RING1. Forms homotypic and heterotypic interactions. Interacts with the SAM domain of ph-p via its SAM domain in vitro. Interacts with corto in vitro.

It is found in the nucleus. Functionally, polycomb group (PcG) protein. PcG proteins act by forming multiprotein complexes, which are required to maintain the transcriptionally repressive state of homeotic genes throughout development. PcG proteins are not required to initiate repression, but to maintain it during later stages of development. They probably act via the methylation of histones, rendering chromatin heritably changed in its expressibility. This is Polycomb protein Scm from Drosophila melanogaster (Fruit fly).